The primary structure comprises 329 residues: NAD(P)H-dependent D-xylose reductase (329 aa).

The active-site Proton donor is the Y52. Residue H114 coordinates substrate. Residues S173–N174, S222–E231, and K278–N288 contribute to the NAD(+) site.

Belongs to the aldo/keto reductase family.

The catalysed reaction is xylitol + NAD(+) = D-xylose + NADH + H(+). It catalyses the reaction xylitol + NADP(+) = D-xylose + NADPH + H(+). Its pathway is carbohydrate metabolism; D-xylose degradation. Functionally, reduces D-xylose into xylitol. The polypeptide is NAD(P)H-dependent D-xylose reductase (XYL1) (Kluyveromyces lactis (strain ATCC 8585 / CBS 2359 / DSM 70799 / NBRC 1267 / NRRL Y-1140 / WM37) (Yeast)).